The primary structure comprises 321 residues: S-methyl-5'-thioadenosine phosphorylase (321 aa).

Phosphate contacts are provided by residues threonine 30, 73–74 (RH), and 106–107 (SA). Methionine 215 contributes to the substrate binding site. Residue serine 216 participates in phosphate binding. 239–241 (DYD) is a binding site for substrate.

The protein belongs to the PNP/MTAP phosphorylase family. MTAP subfamily. In terms of assembly, homotrimer.

It is found in the cytoplasm. It localises to the nucleus. The catalysed reaction is S-methyl-5'-thioadenosine + phosphate = 5-(methylsulfanyl)-alpha-D-ribose 1-phosphate + adenine. The protein operates within amino-acid biosynthesis; L-methionine biosynthesis via salvage pathway; S-methyl-5-thio-alpha-D-ribose 1-phosphate from S-methyl-5'-thioadenosine (phosphorylase route): step 1/1. In terms of biological role, catalyzes the reversible phosphorylation of S-methyl-5'-thioadenosine (MTA) to adenine and 5-methylthioribose-1-phosphate. Involved in the breakdown of MTA, a major by-product of polyamine biosynthesis. Responsible for the first step in the methionine salvage pathway after MTA has been generated from S-adenosylmethionine. Has broad substrate specificity with 6-aminopurine nucleosides as preferred substrates. The protein is S-methyl-5'-thioadenosine phosphorylase of Yarrowia lipolytica (strain CLIB 122 / E 150) (Yeast).